Consider the following 123-residue polypeptide: MATRKSAAPNRSFKVSDQIQRDLAELIARELKDPRVGMVTLQSVEVTPDYAHAKVYFSLLVGDPQATQEALNQAAGFLRNGLFKRLHIHTVPTLHFIYDRTSERAADMNALIAKAVSSRGKEE.

The protein belongs to the RbfA family. As to quaternary structure, monomer. Binds 30S ribosomal subunits, but not 50S ribosomal subunits or 70S ribosomes.

It localises to the cytoplasm. One of several proteins that assist in the late maturation steps of the functional core of the 30S ribosomal subunit. Associates with free 30S ribosomal subunits (but not with 30S subunits that are part of 70S ribosomes or polysomes). Required for efficient processing of 16S rRNA. May interact with the 5'-terminal helix region of 16S rRNA. The chain is Ribosome-binding factor A from Delftia acidovorans (strain DSM 14801 / SPH-1).